The following is a 345-amino-acid chain: Acyl-CoA--sterol O-acyltransferase 1 (345 aa).

9 consecutive transmembrane segments (helical) span residues Met-1–Ile-21, Leu-32–Leu-52, Leu-54–Ala-74, Pro-86–Pro-106, Gly-120–Tyr-140, Val-148–Thr-168, Ile-231–Tyr-251, Asp-258–Ile-278, and Ala-291–Pro-311.

It belongs to the wax synthase family.

It localises to the membrane. Involved in the esterification of cycloartenol. Not implicated in the formation of sterol esters in flowers or during seed maturation. Has a substrate preference toward saturated fatty acyl donors (16:0 &gt; 18:0 &gt; 16:1 &gt; 18:1). Does not require triacyglycerols (TAGs) as a fatty acyl donor, and is unable to acylate diacylglycerol to produce TAG. In Arabidopsis thaliana (Mouse-ear cress), this protein is Acyl-CoA--sterol O-acyltransferase 1 (ASAT1).